The primary structure comprises 317 residues: Serpentine receptor class delta-26 (317 aa).

The next 7 membrane-spanning stretches (helical) occupy residues 5–25 (LLHT…MYLA), 38–58 (AIIT…FFVM), 83–103 (ACYV…IWMI), 122–142 (SLVF…AAWI), 176–196 (ITLI…YAWI), 227–247 (FQVF…AMFG), and 258–278 (LVSI…ILFV).

Belongs to the nematode receptor-like protein srd family.

It is found in the membrane. This chain is Serpentine receptor class delta-26 (srd-26), found in Caenorhabditis elegans.